A 767-amino-acid polypeptide reads, in one-letter code: 5-methyltetrahydropteroyltriglutamate--homocysteine methyltransferase (767 aa).

5-methyltetrahydropteroyltri-L-glutamate-binding positions include 17 to 20 (RELK) and Lys-117. L-homocysteine is bound by residues 441–443 (IGS) and Glu-494. L-methionine contacts are provided by residues 441–443 (IGS) and Glu-494. Residues 525–526 (RC) and Trp-571 contribute to the 5-methyltetrahydropteroyltri-L-glutamate site. Asp-609 is a binding site for L-homocysteine. Asp-609 is a binding site for L-methionine. Glu-615 contacts 5-methyltetrahydropteroyltri-L-glutamate. Zn(2+)-binding residues include His-652, Cys-654, and Glu-676. His-705 functions as the Proton donor in the catalytic mechanism. Cys-737 contacts Zn(2+).

Belongs to the vitamin-B12 independent methionine synthase family. Requires Zn(2+) as cofactor.

It catalyses the reaction 5-methyltetrahydropteroyltri-L-glutamate + L-homocysteine = tetrahydropteroyltri-L-glutamate + L-methionine. Its pathway is amino-acid biosynthesis; L-methionine biosynthesis via de novo pathway; L-methionine from L-homocysteine (MetE route): step 1/1. Its function is as follows. Catalyzes the transfer of a methyl group from 5-methyltetrahydrofolate to homocysteine resulting in methionine formation. The polypeptide is 5-methyltetrahydropteroyltriglutamate--homocysteine methyltransferase (Bifidobacterium longum (strain NCC 2705)).